The primary structure comprises 352 residues: Secretion system apparatus protein SsaU (352 aa).

Transmembrane regions (helical) follow at residues 34-54, 89-109, 144-164, and 176-196; these read LIAL…ILIE, LGAG…GVVI, LKVI…ASTF, and VLVV…FYIV.

The protein belongs to the type III secretion exporter family.

Its subcellular location is the cell membrane. In terms of biological role, part of a type III secretion system. In Salmonella typhimurium (strain LT2 / SGSC1412 / ATCC 700720), this protein is Secretion system apparatus protein SsaU (ssaU).